We begin with the raw amino-acid sequence, 371 residues long: Histidinol-phosphate aminotransferase (371 aa).

Residue Lys-222 is modified to N6-(pyridoxal phosphate)lysine.

Belongs to the class-II pyridoxal-phosphate-dependent aminotransferase family. Histidinol-phosphate aminotransferase subfamily. As to quaternary structure, homodimer. It depends on pyridoxal 5'-phosphate as a cofactor.

It catalyses the reaction L-histidinol phosphate + 2-oxoglutarate = 3-(imidazol-4-yl)-2-oxopropyl phosphate + L-glutamate. The protein operates within amino-acid biosynthesis; L-histidine biosynthesis; L-histidine from 5-phospho-alpha-D-ribose 1-diphosphate: step 7/9. The polypeptide is Histidinol-phosphate aminotransferase (Anoxybacillus flavithermus (strain DSM 21510 / WK1)).